Here is a 151-residue protein sequence, read N- to C-terminus: Small ribosomal subunit protein uS15z (151 aa).

Belongs to the universal ribosomal protein uS15 family.

The chain is Small ribosomal subunit protein uS15z from Oryza sativa subsp. japonica (Rice).